We begin with the raw amino-acid sequence, 133 residues long: Small ribosomal subunit protein uS8 (133 aa).

Belongs to the universal ribosomal protein uS8 family. As to quaternary structure, part of the 30S ribosomal subunit. Contacts proteins S5 and S12.

One of the primary rRNA binding proteins, it binds directly to 16S rRNA central domain where it helps coordinate assembly of the platform of the 30S subunit. This is Small ribosomal subunit protein uS8 from Rippkaea orientalis (strain PCC 8801 / RF-1) (Cyanothece sp. (strain PCC 8801)).